We begin with the raw amino-acid sequence, 272 residues long: Zinc transporter ZupT (272 aa).

The next 8 membrane-spanning stretches (helical) occupy residues 11 to 31 (IALA…LMVV), 40 to 60 (LLAF…LTEI), 76 to 96 (LGFT…MVID), 126 to 146 (LMTA…TFFA), 158 to 178 (AFAI…PVYF), 189 to 209 (ASLL…LALF), 211 to 231 (VLSD…MVFL), and 250 to 270 (VYGL…FRFA). Residues Asn136 and Glu139 each coordinate Fe(2+). Residues Glu139 and His164 each contribute to the Zn(2+) site. Residues Asn165, Glu168, and Glu197 each contribute to the Fe(2+) site. Glu168 provides a ligand contact to Zn(2+).

It belongs to the ZIP transporter (TC 2.A.5) family. ZupT subfamily.

It localises to the cell inner membrane. The catalysed reaction is Zn(2+)(in) = Zn(2+)(out). Its function is as follows. Mediates zinc uptake. May also transport other divalent cations. The polypeptide is Zinc transporter ZupT (Xanthomonas axonopodis pv. citri (strain 306)).